The sequence spans 787 residues: Serine/threonine-protein kinase SCH9 (787 aa).

3 disordered regions span residues 1–82 (MVDF…QSGT), 132–172 (PQQQ…GSSQ), and 238–280 (SPVS…LFGQ). Positions 132-155 (PQQQQQQQAQQPPPEQQQSSAPYQ) are enriched in low complexity. Composition is skewed to polar residues over residues 156-172 (NSANIQQPYGNQWGSSQ) and 239-263 (PVSSFGHNNNQGHNGPRNMYNSNHG). The region spanning 182–354 (DKTGNKLSPA…KNNKNESEWL (173 aa)) is the C2 domain. The 262-residue stretch at 392–653 (FHFLRLLGKG…ARELKAHPFF (262 aa)) folds into the Protein kinase domain. Residues 398–406 (LGKGTFGQV) and K421 each bind ATP. D518 acts as the Proton acceptor in catalysis. The 76-residue stretch at 654–729 (ADIDWDLLRA…VDDSTMDDHF (76 aa)) folds into the AGC-kinase C-terminal domain.

Belongs to the protein kinase superfamily. AGC Ser/Thr protein kinase family. cAMP subfamily.

The enzyme catalyses L-seryl-[protein] + ATP = O-phospho-L-seryl-[protein] + ADP + H(+). The catalysed reaction is L-threonyl-[protein] + ATP = O-phospho-L-threonyl-[protein] + ADP + H(+). Functionally, protein kinase that is part of growth control pathway which is at least partially redundant with the cAMP pathway. Plays a role in filamentous growth and virulence. Prevents hypha formation specifically under hypoxia at high CO(2) levels. Required for chlamydospore formation, distinctive morphological feature of the fungal pathogen C.albicans that can be induced to form in oxygen-limited environments and has been reported in clinical specimens. The polypeptide is Serine/threonine-protein kinase SCH9 (SCH9) (Candida albicans (strain SC5314 / ATCC MYA-2876) (Yeast)).